A 189-amino-acid polypeptide reads, in one-letter code: NADH-quinone oxidoreductase subunit B (189 aa).

[4Fe-4S] cluster contacts are provided by Cys-39, Cys-40, Cys-104, and Cys-135.

The protein belongs to the complex I 20 kDa subunit family. As to quaternary structure, NDH-1 is composed of 14 different subunits. Subunits NuoB, C, D, E, F, and G constitute the peripheral sector of the complex. [4Fe-4S] cluster is required as a cofactor.

It localises to the cell inner membrane. The enzyme catalyses a quinone + NADH + 5 H(+)(in) = a quinol + NAD(+) + 4 H(+)(out). In terms of biological role, NDH-1 shuttles electrons from NADH, via FMN and iron-sulfur (Fe-S) centers, to quinones in the respiratory chain. The immediate electron acceptor for the enzyme in this species is believed to be a menaquinone. Couples the redox reaction to proton translocation (for every two electrons transferred, four hydrogen ions are translocated across the cytoplasmic membrane), and thus conserves the redox energy in a proton gradient. This Chlorobium phaeovibrioides (strain DSM 265 / 1930) (Prosthecochloris vibrioformis (strain DSM 265)) protein is NADH-quinone oxidoreductase subunit B.